The primary structure comprises 449 residues: Interferon-related developmental regulator 1 (449 aa).

Residues 1–10 (MPKNKKRNAP) show a composition bias toward basic residues. The disordered stretch occupies residues 1–42 (MPKNKKRNAPHRGGGGGGGSGAATSAATAGGPHRTVQPFSDE). Gly residues predominate over residues 12-21 (RGGGGGGGSG). Over residues 22–31 (AATSAATAGG) the composition is skewed to low complexity.

It belongs to the IFRD family. In terms of assembly, interacts with PSIP1/LEDGF.

In terms of biological role, could play a role in regulating gene activity in the proliferative and/or differentiative pathways induced by NGF. May be an autocrine factor that attenuates or amplifies the initial ligand-induced signal. This chain is Interferon-related developmental regulator 1 (Ifrd1), found in Mus musculus (Mouse).